A 303-amino-acid chain; its full sequence is Glucose-1-phosphate thymidylyltransferase (303 aa).

2 residues coordinate Mg(2+): D108 and D222.

It belongs to the glucose-1-phosphate thymidylyltransferase family. It depends on Mg(2+) as a cofactor.

It carries out the reaction dTTP + alpha-D-glucose 1-phosphate + H(+) = dTDP-alpha-D-glucose + diphosphate. Catalyzes the formation of dTDP-glucose, from dTTP and glucose 1-phosphate, as well as its pyrophosphorolysis. Functionally, probably involved in the biosynthesis of the acarviose moiety of the alpha-glucosidase inhibitor acarbose. The sequence is that of Glucose-1-phosphate thymidylyltransferase (acbA) from Actinoplanes sp. (strain ATCC 31044 / CBS 674.73 / SE50/110).